A 410-amino-acid polypeptide reads, in one-letter code: Probable serine/threonine-protein kinase PBL9 (410 aa).

Gly2 carries N-myristoyl glycine lipidation. A lipid anchor (S-palmitoyl cysteine) is attached at Cys4. The disordered stretch occupies residues 11 to 46 (AESSGASTKYDAKDIGSLGSKASSVSVRPSPRTEGE). The region spanning 68 to 352 (FRPDSVLGEG…MSEVVSHLEH (285 aa)) is the Protein kinase domain. Residues 74-82 (LGEGGFGCV) and Lys106 contribute to the ATP site. At Tyr151 the chain carries Phosphotyrosine. The Proton acceptor role is filled by Asp203. Phosphoserine occurs at positions 207 and 237. 2 positions are modified to phosphothreonine: Thr238 and Thr243. At Tyr251 the chain carries Phosphotyrosine.

Belongs to the protein kinase superfamily. Ser/Thr protein kinase family. As to quaternary structure, interacts with the Xanthomonas campestris effector XopAC/AvrAC. In terms of tissue distribution, expressed in stomatal guard cells of leaves.

The protein resides in the cell membrane. The catalysed reaction is L-seryl-[protein] + ATP = O-phospho-L-seryl-[protein] + ADP + H(+). It carries out the reaction L-threonyl-[protein] + ATP = O-phospho-L-threonyl-[protein] + ADP + H(+). In terms of biological role, possible bi-functional kinase. In vitro, it exhibits serine/threonine activity. In vivo, can phosphorylate tyrosine residues of limited substrates. May be involved in plant defense signaling. The sequence is that of Probable serine/threonine-protein kinase PBL9 from Arabidopsis thaliana (Mouse-ear cress).